We begin with the raw amino-acid sequence, 324 residues long: tRNA dimethylallyltransferase (324 aa).

17–24 (GPTASGKT) provides a ligand contact to ATP. Substrate is bound at residue 19-24 (TASGKT). Interaction with substrate tRNA regions lie at residues 42–45 (DSAL), 166–170 (QRIQR), 251–256 (RCVGYR), and 284–291 (KRQITWLR).

The protein belongs to the IPP transferase family. In terms of assembly, monomer. Requires Mg(2+) as cofactor.

The catalysed reaction is adenosine(37) in tRNA + dimethylallyl diphosphate = N(6)-dimethylallyladenosine(37) in tRNA + diphosphate. In terms of biological role, catalyzes the transfer of a dimethylallyl group onto the adenine at position 37 in tRNAs that read codons beginning with uridine, leading to the formation of N6-(dimethylallyl)adenosine (i(6)A). This chain is tRNA dimethylallyltransferase, found in Burkholderia lata (strain ATCC 17760 / DSM 23089 / LMG 22485 / NCIMB 9086 / R18194 / 383).